A 492-amino-acid chain; its full sequence is Probable sphingolipid transporter spinster homolog 1 (492 aa).

A helical transmembrane segment spans residues 29-49; it reads FVTILCIINLINYVDRGVIAS. N-linked (GlcNAc...) asparagine glycans are attached at residues N53 and N76. 7 helical membrane passes run 83–103, 119–139, 141–161, 169–189, 200–220, 279–299, and 317–337; these read GLLSSAFMVGLLVASPIFAGL, VWTIAVIGCGFSYNFWMIAVF, MFVGVGEASFISLAAPYIDDS, FWLGLFYMCIPAGVALGYVFG, WAFYIEAIAMAVFVILSFCIK, VFIVNVLGYITYNFVIGAYSY, and IFGGLTIICGIIGTLGGSYVL. N341 is a glycosylation site (N-linked (GlcNAc...) asparagine). 4 consecutive transmembrane segments (helical) span residues 348-368, 372-392, 407-427, and 442-462; these read FKLLAASTLLGAAFCFTAFLM, YAFIALFAVGEILIFAPQAPV, LSMASSTVLIHILGDVPSSPL, and TLIITSILFLAAIIWGIGIFM. S472 carries the phosphoserine modification. The span at 472–481 shows a compositional bias: acidic residues; the sequence is SEDDEVEEDK. The segment at 472–492 is disordered; it reads SEDDEVEEDKLESKTENSTLA. N488 carries N-linked (GlcNAc...) asparagine glycosylation.

It belongs to the major facilitator superfamily. Spinster (TC 2.A.1.49) family.

The protein localises to the late endosome membrane. The protein resides in the lysosome membrane. Its function is as follows. Probable sphingolipid transporter that plays a central role in endosomes and/or lysosomes storage. The protein is Probable sphingolipid transporter spinster homolog 1 of Arabidopsis thaliana (Mouse-ear cress).